The primary structure comprises 57 residues: Large ribosomal subunit protein bL32 (57 aa).

Belongs to the bacterial ribosomal protein bL32 family.

This Shouchella clausii (strain KSM-K16) (Alkalihalobacillus clausii) protein is Large ribosomal subunit protein bL32.